We begin with the raw amino-acid sequence, 125 residues long: Small ribosomal subunit protein uS12 (125 aa).

Asp89 is subject to 3-methylthioaspartic acid.

It belongs to the universal ribosomal protein uS12 family. Part of the 30S ribosomal subunit. Contacts proteins S8 and S17. May interact with IF1 in the 30S initiation complex.

Functionally, with S4 and S5 plays an important role in translational accuracy. In terms of biological role, interacts with and stabilizes bases of the 16S rRNA that are involved in tRNA selection in the A site and with the mRNA backbone. Located at the interface of the 30S and 50S subunits, it traverses the body of the 30S subunit contacting proteins on the other side and probably holding the rRNA structure together. The combined cluster of proteins S8, S12 and S17 appears to hold together the shoulder and platform of the 30S subunit. This is Small ribosomal subunit protein uS12 from Cupriavidus pinatubonensis (strain JMP 134 / LMG 1197) (Cupriavidus necator (strain JMP 134)).